The following is a 187-amino-acid chain: Probable nicotinate-nucleotide adenylyltransferase (187 aa).

Belongs to the NadD family.

The enzyme catalyses nicotinate beta-D-ribonucleotide + ATP + H(+) = deamido-NAD(+) + diphosphate. Its pathway is cofactor biosynthesis; NAD(+) biosynthesis; deamido-NAD(+) from nicotinate D-ribonucleotide: step 1/1. Its function is as follows. Catalyzes the reversible adenylation of nicotinate mononucleotide (NaMN) to nicotinic acid adenine dinucleotide (NaAD). This Anaeromyxobacter sp. (strain K) protein is Probable nicotinate-nucleotide adenylyltransferase.